Here is a 334-residue protein sequence, read N- to C-terminus: Magnesium-chelatase 38 kDa subunit (334 aa).

36-43 (GDRGTGKS) provides a ligand contact to ATP.

The protein belongs to the Mg-chelatase subunits D/I family.

The enzyme catalyses protoporphyrin IX + Mg(2+) + ATP + H2O = Mg-protoporphyrin IX + ADP + phosphate + 3 H(+). It participates in porphyrin-containing compound metabolism; bacteriochlorophyll biosynthesis. Its function is as follows. Involved in bacteriochlorophyll biosynthesis; introduces a magnesium ion into protoporphyrin IX to yield Mg-protoporphyrin IX. This chain is Magnesium-chelatase 38 kDa subunit (bchI), found in Cereibacter sphaeroides (strain ATCC 17023 / DSM 158 / JCM 6121 / CCUG 31486 / LMG 2827 / NBRC 12203 / NCIMB 8253 / ATH 2.4.1.) (Rhodobacter sphaeroides).